Reading from the N-terminus, the 513-residue chain is Teichoic acid ribitol-phosphate polymerase TarK (513 aa).

The protein belongs to the CDP-glycerol glycerophosphotransferase family.

The protein resides in the cell membrane. The enzyme catalyses 4-O-[di(2R)-glycerylphospho]-N-acetyl-beta-D-mannosaminyl-(1-&gt;4)-N-acetyl-alpha-D-glucosaminyl di-trans,octa-cis-undecaprenyl diphosphate + n CDP-L-ribitol = 4-O-[(D-ribitylphospho)(n)-di{(2R)-glycerylphospho}]-N-acetyl-beta-D-mannosaminyl-(1-&gt;4)-N-acetyl-alpha-D-glucosaminyl di-trans,octa-cis-undecaprenyl diphosphate + n CMP + n H(+). Its pathway is cell wall biogenesis; poly(ribitol phosphate) teichoic acid biosynthesis. Its function is as follows. Can catalyze the polymerization of the main chain of the major teichoic acid by sequential transfer of ribitol phosphate units from CDP-ribitol to the second glycerol phosphate attached to the disaccharide linkage unit. The polypeptide is Teichoic acid ribitol-phosphate polymerase TarK (tarK) (Staphylococcus aureus (strain NCTC 8325 / PS 47)).